The following is a 164-amino-acid chain: Seripauperin-21 (164 aa).

It belongs to the SRP1/TIP1 family. Seripauperin subfamily.

The chain is Seripauperin-21 (PAU21) from Saccharomyces cerevisiae (strain ATCC 204508 / S288c) (Baker's yeast).